A 745-amino-acid polypeptide reads, in one-letter code: MEHADQYSWIIPFVPLPIPILIGMGLLLFPTATKRLLLFPTATKNLRRMWAFPNILLLSIVMIFSLDLSIQQINGSSIYQYVWSWTINNDFSFEFGYFIDSLTSIMSILITTVGIFVLIYSDNYMSHDEGYLRFFAYMSLFNTSMLGLVTSCNLIQIYIFWELVGMCSYLLIGFWFTRPAAANACQKAFVTNRIGDFGLLLGILGFYWITGSFEFQDLFEIFNNLIYNNEVHFLFVTLCASLLFAGAVAKSAQFPLHVWLPDAMEGPTPISALIHAATMVAAGIFLVARLFPLFIVIPYIMNLISLIGIITVLLGATLALAQNDIKRGLAYSTMSQLGYMMLALGMGSYRAALFHLITHAYSKALLFLASGSIIHSMEAIVGYSPEKSQNMVFMGGLRKHVPVTQIAFLVGTLSLCGIPPLACFWSKDEILSDSWLYSPIFAIIAWSTAGLTAFYMFRIYLLTFEGHLNVHFQKYSGKKSSSFYSIKLWGKEEQKIINRNFRLFPLLTLTMNNNEQPYTIGGKKEARITITNFGYKKAFSYPHESDNTMLFPMLILLLFTLFVGAIAIPFNQEGMHLDILSKLLTPSINLLHQNSNDFEDSYQFFKNATFSVSIACFGIFTAFLLYKPFYSSVQNLNLLNSFVKRGPKRILLDKMIYLIYDWSYNRGYIDMFYSISLTKGIRGLAELTHFFDRRVIDGITNGVGITSFFVGESVKYLGGSRISFYLLLYLVYVFIFLVISYFILF.

The next 16 membrane-spanning stretches (helical) occupy residues 9-29, 50-70, 99-119, 135-155, 157-177, 194-214, 229-249, 268-288, 290-310, 337-357, 364-384, 406-426, 435-455, 550-570, 610-630, and 724-744; these read WIIP…LLLF, WAFP…DLSI, IDSL…FVLI, FAYM…CNLI, IYIF…FWFT, IGDF…GSFE, NEVH…GAVA, TPIS…FLVA, LFPL…IGII, LGYM…FHLI, ALLF…VGYS, IAFL…CFWS, WLYS…TAFY, LFPM…AIPF, FSVS…KPFY, and FYLL…YFIL.

This sequence belongs to the complex I subunit 5 family. NDH is composed of at least 16 different subunits, 5 of which are encoded in the nucleus.

The protein localises to the plastid. The protein resides in the chloroplast thylakoid membrane. The enzyme catalyses a plastoquinone + NADH + (n+1) H(+)(in) = a plastoquinol + NAD(+) + n H(+)(out). The catalysed reaction is a plastoquinone + NADPH + (n+1) H(+)(in) = a plastoquinol + NADP(+) + n H(+)(out). In terms of biological role, NDH shuttles electrons from NAD(P)H:plastoquinone, via FMN and iron-sulfur (Fe-S) centers, to quinones in the photosynthetic chain and possibly in a chloroplast respiratory chain. The immediate electron acceptor for the enzyme in this species is believed to be plastoquinone. Couples the redox reaction to proton translocation, and thus conserves the redox energy in a proton gradient. The chain is NAD(P)H-quinone oxidoreductase subunit 5, chloroplastic (ndhF) from Gossypium barbadense (Sea Island cotton).